A 185-amino-acid chain; its full sequence is Ribosome-recycling factor (185 aa).

This sequence belongs to the RRF family.

Its subcellular location is the cytoplasm. Responsible for the release of ribosomes from messenger RNA at the termination of protein biosynthesis. May increase the efficiency of translation by recycling ribosomes from one round of translation to another. The polypeptide is Ribosome-recycling factor (Laribacter hongkongensis (strain HLHK9)).